The chain runs to 160 residues: Cytochrome b6-f complex subunit 4 (160 aa).

Helical transmembrane passes span 36 to 56 (LLYIFPVVILGTIACTVGLAV), 68 to 88 (PFATPLEILPEWYFFPVFQIL), 95 to 115 (FFGVLLMTSVPFGLLTVPFLE), and 131 to 151 (SVFLIGTVISLWLGFGAVLPI).

Belongs to the cytochrome b family. PetD subfamily. As to quaternary structure, the 4 large subunits of the cytochrome b6-f complex are cytochrome b6, subunit IV (17 kDa polypeptide, petD), cytochrome f and the Rieske protein, while the 4 small subunits are petG, petL, petM and petN. The complex functions as a dimer.

The protein localises to the plastid. The protein resides in the chloroplast thylakoid membrane. Functionally, component of the cytochrome b6-f complex, which mediates electron transfer between photosystem II (PSII) and photosystem I (PSI), cyclic electron flow around PSI, and state transitions. In Welwitschia mirabilis (Tree tumbo), this protein is Cytochrome b6-f complex subunit 4.